Reading from the N-terminus, the 188-residue chain is Elongation factor P (188 aa).

The protein belongs to the elongation factor P family.

It is found in the cytoplasm. Its pathway is protein biosynthesis; polypeptide chain elongation. Involved in peptide bond synthesis. Stimulates efficient translation and peptide-bond synthesis on native or reconstituted 70S ribosomes in vitro. Probably functions indirectly by altering the affinity of the ribosome for aminoacyl-tRNA, thus increasing their reactivity as acceptors for peptidyl transferase. The chain is Elongation factor P from Anaplasma marginale (strain Florida).